A 328-amino-acid polypeptide reads, in one-letter code: L-lactate dehydrogenase (328 aa).

NAD(+) is bound by residues V18, E39, K46, Y71, and 85–86 (GA). Residues Q88 and R94 each contribute to the substrate site. NAD(+)-binding positions include S107, 124–126 (AAN), and S149. 126 to 129 (NPVD) lines the substrate pocket. 154 to 157 (DSAR) provides a ligand contact to substrate. Beta-D-fructose 1,6-bisphosphate-binding residues include R159 and H174. The Proton acceptor role is filled by H181. Phosphotyrosine is present on Y226. T235 contributes to the substrate binding site.

It belongs to the LDH/MDH superfamily. LDH family. Homotetramer.

The protein localises to the cytoplasm. The catalysed reaction is (S)-lactate + NAD(+) = pyruvate + NADH + H(+). Its pathway is fermentation; pyruvate fermentation to lactate; (S)-lactate from pyruvate: step 1/1. With respect to regulation, allosterically activated by fructose 1,6-bisphosphate (FBP). Catalyzes the conversion of lactate to pyruvate. The polypeptide is L-lactate dehydrogenase (Streptococcus sanguinis (strain SK36)).